The following is a 330-amino-acid chain: Protein RecA (330 aa).

66 to 73 (GPESSGKT) is an ATP binding site.

This sequence belongs to the RecA family.

It localises to the cytoplasm. Its function is as follows. Can catalyze the hydrolysis of ATP in the presence of single-stranded DNA, the ATP-dependent uptake of single-stranded DNA by duplex DNA, and the ATP-dependent hybridization of homologous single-stranded DNAs. It interacts with LexA causing its activation and leading to its autocatalytic cleavage. This Bacteroides thetaiotaomicron (strain ATCC 29148 / DSM 2079 / JCM 5827 / CCUG 10774 / NCTC 10582 / VPI-5482 / E50) protein is Protein RecA.